A 303-amino-acid chain; its full sequence is MYIQILGSAAGGGFPQWNCNCVNCAGFRDGSLRAQARTQSSIALSDDGVNWVLCNASPDIRAQLQGFAPMQPGRALRDTGISAIVLMDSQIDHTTGLLSLREGCPHQVWCTDMVHEDLSTGFPLFEMLKHWNGGLNWNRIELQGSFVIPACPNLRFTPFPLRSAAPPYSPHRFDPHPGDNIGLLVEDTRTGGKLFYAPGLGKVDEALAEKMRDADCLLVDGTMWDDDEMQRRGVGTRTGREMGHLAQNGPGGMLDVLEGFPEQRKVLIHINNTNPILDEDSPERAELVRRNVEVAFDGMSIEL.

Belongs to the PqqB family.

It functions in the pathway cofactor biosynthesis; pyrroloquinoline quinone biosynthesis. In terms of biological role, may be involved in the transport of PQQ or its precursor to the periplasm. The sequence is that of Coenzyme PQQ synthesis protein B from Pseudomonas syringae pv. tomato (strain ATCC BAA-871 / DC3000).